Consider the following 320-residue polypeptide: GMP reductase (320 aa).

Cys-174 acts as the Thioimidate intermediate in catalysis. 203–226 (IIADGGLRVNGDIAKSIRFGATMC) is a binding site for NADP(+).

Belongs to the IMPDH/GMPR family. GuaC type 2 subfamily.

It carries out the reaction IMP + NH4(+) + NADP(+) = GMP + NADPH + 2 H(+). Its function is as follows. Catalyzes the irreversible NADPH-dependent deamination of GMP to IMP. It functions in the conversion of nucleobase, nucleoside and nucleotide derivatives of G to A nucleotides, and in maintaining the intracellular balance of A and G nucleotides. The protein is GMP reductase of Mesoplasma florum (strain ATCC 33453 / NBRC 100688 / NCTC 11704 / L1) (Acholeplasma florum).